The sequence spans 262 residues: Pyridoxine 5'-phosphate synthase (262 aa).

Asparagine 6 contacts 3-amino-2-oxopropyl phosphate. 8-9 (DH) contacts 1-deoxy-D-xylulose 5-phosphate. Position 17 (arginine 17) interacts with 3-amino-2-oxopropyl phosphate. Histidine 43 (proton acceptor) is an active-site residue. 1-deoxy-D-xylulose 5-phosphate-binding residues include arginine 45 and histidine 50. The Proton acceptor role is filled by glutamate 70. Position 102 (threonine 102) interacts with 1-deoxy-D-xylulose 5-phosphate. Histidine 215 functions as the Proton donor in the catalytic mechanism. 3-amino-2-oxopropyl phosphate is bound by residues glycine 216 and 237–238 (GH).

It belongs to the PNP synthase family. As to quaternary structure, homooctamer; tetramer of dimers.

It is found in the cytoplasm. The enzyme catalyses 3-amino-2-oxopropyl phosphate + 1-deoxy-D-xylulose 5-phosphate = pyridoxine 5'-phosphate + phosphate + 2 H2O + H(+). The protein operates within cofactor biosynthesis; pyridoxine 5'-phosphate biosynthesis; pyridoxine 5'-phosphate from D-erythrose 4-phosphate: step 5/5. Functionally, catalyzes the complicated ring closure reaction between the two acyclic compounds 1-deoxy-D-xylulose-5-phosphate (DXP) and 3-amino-2-oxopropyl phosphate (1-amino-acetone-3-phosphate or AAP) to form pyridoxine 5'-phosphate (PNP) and inorganic phosphate. The sequence is that of Pyridoxine 5'-phosphate synthase from Helicobacter pylori (strain HPAG1).